An 88-amino-acid polypeptide reads, in one-letter code: UPF0367 protein AM1_1885 (88 aa).

Belongs to the UPF0367 family.

This Acaryochloris marina (strain MBIC 11017) protein is UPF0367 protein AM1_1885.